We begin with the raw amino-acid sequence, 357 residues long: UPF0283 membrane protein BMEI0952 (357 aa).

The interval 1–36 is disordered; that stretch reads MSDKTPRKPTAFRLEQPARVSAASEQEEPRRPRAVK. Residues 27-36 are compositionally biased toward basic and acidic residues; it reads EEPRRPRAVK. Helical transmembrane passes span 78–98 and 109–129; these read ILFG…TEDL and LGWT…AIIL.

It belongs to the UPF0283 family.

The protein resides in the cell inner membrane. In Brucella melitensis biotype 1 (strain ATCC 23456 / CCUG 17765 / NCTC 10094 / 16M), this protein is UPF0283 membrane protein BMEI0952.